The chain runs to 283 residues: Putative 4-diphosphocytidyl-2-C-methyl-D-erythritol kinase (283 aa).

The active site involves K10. 94 to 104 (PVCAGLGGGST) provides a ligand contact to ATP. The active site involves D136.

The protein belongs to the GHMP kinase family. IspE subfamily.

The catalysed reaction is 4-CDP-2-C-methyl-D-erythritol + ATP = 4-CDP-2-C-methyl-D-erythritol 2-phosphate + ADP + H(+). Its function is as follows. Catalyzes the phosphorylation of the position 2 hydroxy group of 4-diphosphocytidyl-2C-methyl-D-erythritol. This chain is Putative 4-diphosphocytidyl-2-C-methyl-D-erythritol kinase, found in Streptococcus agalactiae serotype III (strain NEM316).